Here is a 504-residue protein sequence, read N- to C-terminus: Maturase K (504 aa).

The protein belongs to the intron maturase 2 family. MatK subfamily.

It localises to the plastid. It is found in the chloroplast. In terms of biological role, usually encoded in the trnK tRNA gene intron. Probably assists in splicing its own and other chloroplast group II introns. This chain is Maturase K, found in Vigna mungo (Black gram).